Consider the following 199-residue polypeptide: Protein-methionine-sulfoxide reductase heme-binding subunit MsrQ (199 aa).

5 helical membrane-spanning segments follow: residues 10–30 (WLKV…ILSV), 79–99 (LLGL…SVLE), 118–138 (LTLG…STLW), 147–167 (WQKL…HYLW), and 169–189 (VKTL…LLAL).

Belongs to the MsrQ family. As to quaternary structure, heterodimer of a catalytic subunit (MsrP) and a heme-binding subunit (MsrQ). The cofactor is FMN. It depends on heme b as a cofactor.

Its subcellular location is the cell inner membrane. Part of the MsrPQ system that repairs oxidized periplasmic proteins containing methionine sulfoxide residues (Met-O), using respiratory chain electrons. Thus protects these proteins from oxidative-stress damage caused by reactive species of oxygen and chlorine generated by the host defense mechanisms. MsrPQ is essential for the maintenance of envelope integrity under bleach stress, rescuing a wide series of structurally unrelated periplasmic proteins from methionine oxidation. MsrQ provides electrons for reduction to the reductase catalytic subunit MsrP, using the quinone pool of the respiratory chain. The sequence is that of Protein-methionine-sulfoxide reductase heme-binding subunit MsrQ from Yersinia enterocolitica serotype O:8 / biotype 1B (strain NCTC 13174 / 8081).